We begin with the raw amino-acid sequence, 592 residues long: Aspartate--tRNA(Asp/Asn) ligase (592 aa).

An L-aspartate-binding site is contributed by glutamate 172. The segment at 196 to 199 (QLFK) is aspartate. Position 218 (arginine 218) interacts with L-aspartate. ATP contacts are provided by residues 218–220 (RDE) and glutamine 227. Histidine 450 contributes to the L-aspartate binding site. An ATP-binding site is contributed by glutamate 484. Arginine 491 contributes to the L-aspartate binding site. Residue 536–539 (GLDR) coordinates ATP.

It belongs to the class-II aminoacyl-tRNA synthetase family. Type 1 subfamily. As to quaternary structure, homodimer.

Its subcellular location is the cytoplasm. It carries out the reaction tRNA(Asx) + L-aspartate + ATP = L-aspartyl-tRNA(Asx) + AMP + diphosphate. Aspartyl-tRNA synthetase with relaxed tRNA specificity since it is able to aspartylate not only its cognate tRNA(Asp) but also tRNA(Asn). Reaction proceeds in two steps: L-aspartate is first activated by ATP to form Asp-AMP and then transferred to the acceptor end of tRNA(Asp/Asn). This Thioalkalivibrio sulfidiphilus (strain HL-EbGR7) protein is Aspartate--tRNA(Asp/Asn) ligase.